Consider the following 732-residue polypeptide: Cyclopenase asqI (732 aa).

The Zn(2+) site is built by H168, H172, and H200.

Belongs to the tyrosinase family. It depends on Zn(2+) as a cofactor.

It catalyses the reaction (-)-cyclopenine = viridicatin + methyl isocyanate + H(+). It carries out the reaction (-)-4'-methoxycyclopenine = 4'-methoxyviridicatin + methyl isocyanate + H(+). Its pathway is secondary metabolite biosynthesis. It functions in the pathway alkaloid biosynthesis. It participates in mycotoxin biosynthesis. Its function is as follows. Cyclopenase; part of the gene cluster that mediates the biosynthesis of the aspoquinolone mycotoxins. Within the pathway, the cyclopenase asqI catalyzes the conversion of 4'-methoxycyclopenin into 4'-methoxyviridicatin. Cyclopenin can also be converted into viridicatin by asqI. The first step of the pathway is catalyzed by the nonribosomal peptide synthetase asqK that condenses anthranilic acid and O-methyl-L-tyrosine to produce 4'-methoxycyclopeptin. 4'-methoxycyclopeptin is then converted to 4'-methoxydehydrocyclopeptin by the ketoglutarate-dependent dioxygenase asqJ. AsqJ also converts its first product 4'-methoxydehydrocyclopeptin to 4'-methoxycyclopenin. The following conversion of 4'-methoxycyclopenin into 4'-methoxyviridicatin is catalyzed by the cyclopenase asqI. 4'-methoxyviridicatin is the precursor of quinolone natural products, and is further converted to quinolinone B. The prenyltransferase asqH1 then catalyzes the canonical Friedel-Crafts alkylation of quinolinone B with dimethylallyl cation to yield dimethylallyl quinolone, which is subjected to FAD-dependent dehydrogenation by the FAD-linked oxidoreductase asqF to yield conjugated aryl diene. The delta(3') double bond then serves as the site of the second alkylation with DMAPP catalyzed by the prenyltransferase asqH2 to yield a carbenium ion intermediate, which can be attacked by H(2)O to yield a styrenyl quinolone containing a C3'-hydroxyprenyl chain. The FAD-dependent monooxygenase asqG performs epoxidation of the terminal C7'-C8' olefin. Finally, after dehydratation of the epoxide at C3 by asqC, the quinolone epoxide rearrangement protein asqO catalyzes an enzymatic 3-exo-tet cyclization to yield the cyclopropyl-THF ring system in aspoquinolone. The polypeptide is Cyclopenase asqI (Emericella nidulans (strain FGSC A4 / ATCC 38163 / CBS 112.46 / NRRL 194 / M139) (Aspergillus nidulans)).